Reading from the N-terminus, the 365-residue chain is P43 5S RNA-binding protein (365 aa).

9 C2H2-type zinc fingers span residues 15 to 39 (LRCP…MAGH), 45 to 69 (WKCG…VKRH), 75 to 100 (LSCP…LYKH), 106 to 130 (LKCF…LSVH), 136 to 160 (SVCD…QKRH), 163 to 187 (YRCS…VKKH), 191 to 213 (LQCA…KATH), 220 to 245 (LPCP…RKLH), and 251 to 275 (HRCP…LVVH).

In terms of assembly, the 42S RNP particle comprises four subunits each of which contains one molecule of 5S RNA, three molecules of tRNA, two molecules of p50 (EF1-alpha) and one molecule of the 5S RNA binding protein 43.

Functionally, p43 is a 5S RNA binding protein which is a major constituent of oocytes and comprises part of a 42S ribonucleoprotein storage particle. This is P43 5S RNA-binding protein from Xenopus laevis (African clawed frog).